A 246-amino-acid chain; its full sequence is Acetoacetate decarboxylase (246 aa).

The Schiff-base intermediate with acetoacetate role is filled by Lys-116.

This sequence belongs to the ADC family.

It catalyses the reaction acetoacetate + H(+) = acetone + CO2. Functionally, catalyzes the conversion of acetoacetate to acetone and carbon dioxide. The sequence is that of Acetoacetate decarboxylase from Burkholderia cenocepacia (strain HI2424).